Consider the following 408-residue polypeptide: CinA-like protein (408 aa).

It belongs to the CinA family.

This is CinA-like protein from Anaeromyxobacter dehalogenans (strain 2CP-1 / ATCC BAA-258).